Consider the following 162-residue polypeptide: Iron-sulfur cluster assembly protein IscU (162 aa).

Belongs to the NifU family. In terms of assembly, homotrimer. Small proportion is monomeric. Interacts with IscS. Interacts with ABCB6. Component of a complex, at least composed of IscS, Isd11 and IscU. Requires [4Fe-4S] cluster as cofactor.

It is found in the mitochondrion. Its pathway is cofactor biosynthesis; iron-sulfur cluster biosynthesis. Functionally, participates in iron-sulfur cluster formation (ISC) pathway for iron-sulfur (Fe-S) cluster biogenesis. Plays a role of a major scaffold protein for [Fe-S] assembly; assembles [4Fe-4S] clusters directly upon interaction with the catalytic component IscS-Isd11 as part of the scaffold complex. Can transfer [4Fe-4S] clusters to target apo-proteins. The protein is Iron-sulfur cluster assembly protein IscU of Plasmodium falciparum (isolate 3D7).